We begin with the raw amino-acid sequence, 346 residues long: Tetraacyldisaccharide 4'-kinase (346 aa).

54-61 serves as a coordination point for ATP; sequence TVGGAGKT.

It belongs to the LpxK family.

The catalysed reaction is a lipid A disaccharide + ATP = a lipid IVA + ADP + H(+). The protein operates within glycolipid biosynthesis; lipid IV(A) biosynthesis; lipid IV(A) from (3R)-3-hydroxytetradecanoyl-[acyl-carrier-protein] and UDP-N-acetyl-alpha-D-glucosamine: step 6/6. In terms of biological role, transfers the gamma-phosphate of ATP to the 4'-position of a tetraacyldisaccharide 1-phosphate intermediate (termed DS-1-P) to form tetraacyldisaccharide 1,4'-bis-phosphate (lipid IVA). The sequence is that of Tetraacyldisaccharide 4'-kinase from Sinorhizobium medicae (strain WSM419) (Ensifer medicae).